The following is a 505-amino-acid chain: MGLHWQWLIWALVGLHVALATKWYGGGMDFNDPTAWLDDHLPCAQDLVVFPEYYPALLPLPEDISIDGLVFPREGAILLAEESTITFGSDKQPSCESDENKAYLKPPKSSKWFDPGTWTDKSKEFSTFTPELERIPCDDEQVIIKGHGPLAFDLENVQYLRLGQLILAGSSISKTYLEQLISRDLGQFLFYNAEYVQVEYYRGELCGCHKDFERLLEPVCHNVQEQCETPHCLSPVRPLGSCCLICGAILSTPTTHCTEGSRKELVAQISNLISQESLKDQIGLHVEFVGSQKFGNCLQAVVTDRHKYSERSLEFLQQNEHNWNKTGTTLKVSGRPYNPNVSFSSIVLILFCMALVGLVSVVILAHFMPENPYLNRIPQWIHDPRLWRWRHLGLRLRRNLLFNRFDNGGAEGGSSEGGASGVDRLGIMAYDPESGEVRERAFDNPMFEQGGALEEAAKESQEQDEILSVPKMETGDLDARSVVDEQELTEINLETCEADTDEETI.

The signal sequence occupies residues 1–20 (MGLHWQWLIWALVGLHVALA). Residues 21–344 (TKWYGGGMDF…RPYNPNVSFS (324 aa)) lie on the Extracellular side of the membrane. Residues 345-365 (SIVLILFCMALVGLVSVVILA) traverse the membrane as a helical segment. The Cytoplasmic segment spans residues 366-505 (HFMPENPYLN…CEADTDEETI (140 aa)). The tract at residues 451 to 482 (GALEEAAKESQEQDEILSVPKMETGDLDARSV) is disordered. Residues 473–482 (ETGDLDARSV) are compositionally biased toward basic and acidic residues.

As to expression, specifically expressed in nephrocytes.

The protein localises to the cell membrane. Required in the nephrocyte for normal uptake of proteins and elimination of toxins, and for maintenance of endocytic trafficking structures. May function together with Cubn. This Drosophila melanogaster (Fruit fly) protein is Protein amnionless.